The chain runs to 255 residues: Complement C1q-like protein 3 (255 aa).

An N-terminal signal peptide occupies residues 1-20 (MVLLLVILIPVLVSSAGTSA). Positions 39 to 109 (KAPSTAATPD…GLPGPPGAPG (71 aa)) are disordered. Positions 61 to 111 (GPKGEAGRPGKAGPRGPPGEPGPPGPMGPPGEKGEPGRQGLPGPPGAPGLN) constitute a Collagen-like domain. Residues 75 to 89 (RGPPGEPGPPGPMGP) show a composition bias toward pro residues. The 134-residue stretch at 122–255 (STVPKIAFYA…TFSGFIIYAD (134 aa)) folds into the C1q domain.

As to quaternary structure, forms homooligomers. Interacts with ADGRB3. Interacts with C1QL2 and C1QL4, when proteins are coexpressed; this interaction does not occur after secretion. Highly expressed in adipose tissue, with expression levels at least 2 orders of magnitude higher than in other tissues, including brain and kidney.

It is found in the secreted. Its function is as follows. May regulate the number of excitatory synapses that are formed on hippocampus neurons. Has no effect on inhibitory synapses. Plays a role in glucose homeostasis. Via AMPK signaling pathway, stimulates glucose uptake in adipocytes, myotubes and hepatocytes and enhances insulin-stimulated glucose uptake. In a hepatoma cell line, reduces the expression of gluconeogenic enzymes G6PC1 and PCK1 and hence decreases de novo glucose production. In Homo sapiens (Human), this protein is Complement C1q-like protein 3 (C1QL3).